The primary structure comprises 300 residues: Lysenin-related protein 1 (300 aa).

The tract at residues 12–35 is N-terminal cap domain; that stretch reads EEIEVDVVSVWKEGYAYENRGNSS. The beta-hairpin domain stretch occupies residues 36 to 109; the sequence is VQQKITMTKG…SQVIEHTVTI (74 aa). The tract at residues 110-158 is N-terminal cap domain; the sequence is PPNKKFTRWKLNADVGGTGIEYMYLIDEVTAIGADLTIPEVNKSRAKIL. Residues 159–299 are C-terminal receptor-binding domain; the sequence is VGRQIHLGET…EDKWILEVVN (141 aa). K187, S229, Y235, and Y284 together coordinate an N-(acyl)-sphingosylphosphocholine. C274 and C285 are oxidised to a cystine.

It belongs to the lysenin family. As to quaternary structure, binds to sphingomyelin as a monomer by using its C-terminal domain. Forms a nonamer when sphingomyelin/LRP-1 ratio is lower than ca 500. Oligomerization, but not binding, is influenced by the fluidity of sphingomyelin. Expressed by coelomocytes.

The protein localises to the secreted. The protein resides in the target cell membrane. In terms of biological role, pore-forming toxin that specifically binds sphingomyelin in the plasma membrane of various cells. Has hemolytic activity. Binding and hemolytic activities of this toxin are 10 times less than those of lysenin and lysenin-related protein 2. This Eisenia fetida (Red wiggler worm) protein is Lysenin-related protein 1.